A 382-amino-acid polypeptide reads, in one-letter code: Lipid-A-disaccharide synthase (382 aa).

This sequence belongs to the LpxB family.

It carries out the reaction 2-N,3-O-bis[(3R)-3-hydroxytetradecanoyl]-alpha-D-glucosaminyl 1-phosphate + UDP-2-N,3-O-bis[(3R)-3-hydroxytetradecanoyl]-alpha-D-glucosamine = lipid A disaccharide (E. coli) + UDP + H(+). The enzyme catalyses a lipid X + a UDP-2-N,3-O-bis[(3R)-3-hydroxyacyl]-alpha-D-glucosamine = a lipid A disaccharide + UDP + H(+). The protein operates within glycolipid biosynthesis; lipid IV(A) biosynthesis; lipid IV(A) from (3R)-3-hydroxytetradecanoyl-[acyl-carrier-protein] and UDP-N-acetyl-alpha-D-glucosamine: step 5/6. Functionally, condensation of UDP-2,3-diacylglucosamine and 2,3-diacylglucosamine-1-phosphate to form lipid A disaccharide, a precursor of lipid A, a phosphorylated glycolipid that anchors the lipopolysaccharide to the outer membrane of the cell. The sequence is that of Lipid-A-disaccharide synthase from Salmonella typhimurium (strain LT2 / SGSC1412 / ATCC 700720).